Here is a 283-residue protein sequence, read N- to C-terminus: ATP phosphoribosyltransferase (283 aa).

The protein belongs to the ATP phosphoribosyltransferase family. Long subfamily. Mg(2+) serves as cofactor.

Its subcellular location is the cytoplasm. It catalyses the reaction 1-(5-phospho-beta-D-ribosyl)-ATP + diphosphate = 5-phospho-alpha-D-ribose 1-diphosphate + ATP. It functions in the pathway amino-acid biosynthesis; L-histidine biosynthesis; L-histidine from 5-phospho-alpha-D-ribose 1-diphosphate: step 1/9. Its activity is regulated as follows. Feedback inhibited by histidine. Functionally, catalyzes the condensation of ATP and 5-phosphoribose 1-diphosphate to form N'-(5'-phosphoribosyl)-ATP (PR-ATP). Has a crucial role in the pathway because the rate of histidine biosynthesis seems to be controlled primarily by regulation of HisG enzymatic activity. This is ATP phosphoribosyltransferase from Rhodococcus erythropolis (strain PR4 / NBRC 100887).